The primary structure comprises 245 residues: tRNA (guanine-N(1)-)-methyltransferase (245 aa).

Residues G111 and 131 to 136 (IGDYVL) each bind S-adenosyl-L-methionine.

It belongs to the RNA methyltransferase TrmD family. As to quaternary structure, homodimer.

It localises to the cytoplasm. It carries out the reaction guanosine(37) in tRNA + S-adenosyl-L-methionine = N(1)-methylguanosine(37) in tRNA + S-adenosyl-L-homocysteine + H(+). Functionally, specifically methylates guanosine-37 in various tRNAs. This chain is tRNA (guanine-N(1)-)-methyltransferase, found in Staphylococcus carnosus (strain TM300).